Here is a 284-residue protein sequence, read N- to C-terminus: Putative ABC transporter ATP-binding protein SCO5958 (284 aa).

Residues 15–250 (VALRGAAFAY…DLLRRAGLRL (236 aa)) form the ABC transporter domain. 48-55 (GRNGSGKT) provides a ligand contact to ATP.

This sequence belongs to the ABC transporter superfamily.

It localises to the cell membrane. Functionally, probably part of an ABC transporter complex. Responsible for energy coupling to the transport system. The chain is Putative ABC transporter ATP-binding protein SCO5958 from Streptomyces coelicolor (strain ATCC BAA-471 / A3(2) / M145).